A 668-amino-acid polypeptide reads, in one-letter code: DNA ligase (668 aa).

NAD(+) is bound by residues 37-41 (DAVYD), 86-87 (SM), and glutamate 116. Lysine 118 functions as the N6-AMP-lysine intermediate in the catalytic mechanism. 4 residues coordinate NAD(+): arginine 139, glutamate 173, lysine 288, and lysine 312. Residues cysteine 406, cysteine 409, cysteine 424, and cysteine 429 each coordinate Zn(2+). The BRCT domain maps to 590–668 (APDNFFKEKT…EQEAIAKIEK (79 aa)).

It belongs to the NAD-dependent DNA ligase family. LigA subfamily. Mg(2+) is required as a cofactor. The cofactor is Mn(2+).

It carries out the reaction NAD(+) + (deoxyribonucleotide)n-3'-hydroxyl + 5'-phospho-(deoxyribonucleotide)m = (deoxyribonucleotide)n+m + AMP + beta-nicotinamide D-nucleotide.. Its function is as follows. DNA ligase that catalyzes the formation of phosphodiester linkages between 5'-phosphoryl and 3'-hydroxyl groups in double-stranded DNA using NAD as a coenzyme and as the energy source for the reaction. It is essential for DNA replication and repair of damaged DNA. In Lactobacillus gasseri (strain ATCC 33323 / DSM 20243 / BCRC 14619 / CIP 102991 / JCM 1131 / KCTC 3163 / NCIMB 11718 / NCTC 13722 / AM63), this protein is DNA ligase.